Here is a 464-residue protein sequence, read N- to C-terminus: Argininosuccinate lyase (464 aa).

This sequence belongs to the lyase 1 family. Argininosuccinate lyase subfamily.

Its subcellular location is the cytoplasm. It carries out the reaction 2-(N(omega)-L-arginino)succinate = fumarate + L-arginine. The protein operates within amino-acid biosynthesis; L-arginine biosynthesis; L-arginine from L-ornithine and carbamoyl phosphate: step 3/3. This is Argininosuccinate lyase from Pseudomonas putida (strain GB-1).